The chain runs to 267 residues: Phosphatidylglycerol--prolipoprotein diacylglyceryl transferase (267 aa).

3 helical membrane-spanning segments follow: residues 18–38 (LSVR…MWFA), 57–77 (FLFY…VLFY), and 95–115 (GGMS…IFAW). Residue R140 participates in a 1,2-diacyl-sn-glycero-3-phospho-(1'-sn-glycerol) binding. 3 helical membrane-spanning segments follow: residues 173–193 (SQLY…QWFI), 200–220 (GSVA…IEYF), and 233–253 (FISM…GLLI).

The protein belongs to the Lgt family.

The protein resides in the cell inner membrane. It catalyses the reaction L-cysteinyl-[prolipoprotein] + a 1,2-diacyl-sn-glycero-3-phospho-(1'-sn-glycerol) = an S-1,2-diacyl-sn-glyceryl-L-cysteinyl-[prolipoprotein] + sn-glycerol 1-phosphate + H(+). It participates in protein modification; lipoprotein biosynthesis (diacylglyceryl transfer). Its function is as follows. Catalyzes the transfer of the diacylglyceryl group from phosphatidylglycerol to the sulfhydryl group of the N-terminal cysteine of a prolipoprotein, the first step in the formation of mature lipoproteins. This Pseudoalteromonas translucida (strain TAC 125) protein is Phosphatidylglycerol--prolipoprotein diacylglyceryl transferase.